Consider the following 431-residue polypeptide: Adenylosuccinate synthetase (431 aa).

GTP-binding positions include 12–18 (GDEGKGK) and 40–42 (GHT). The active-site Proton acceptor is Asp13. 2 residues coordinate Mg(2+): Asp13 and Gly40. IMP-binding positions include 13–16 (DEGK), 38–41 (NAGH), Thr129, Arg143, Gln224, Thr239, and Arg303. His41 (proton donor) is an active-site residue. 299-305 (VTTGRAR) is a substrate binding site. GTP contacts are provided by residues Arg305, 331–333 (KLD), and 413–415 (GVG).

The protein belongs to the adenylosuccinate synthetase family. Homodimer. Mg(2+) serves as cofactor.

The protein localises to the cytoplasm. The catalysed reaction is IMP + L-aspartate + GTP = N(6)-(1,2-dicarboxyethyl)-AMP + GDP + phosphate + 2 H(+). It participates in purine metabolism; AMP biosynthesis via de novo pathway; AMP from IMP: step 1/2. Plays an important role in the de novo pathway of purine nucleotide biosynthesis. Catalyzes the first committed step in the biosynthesis of AMP from IMP. This is Adenylosuccinate synthetase from Mycobacteroides abscessus (strain ATCC 19977 / DSM 44196 / CCUG 20993 / CIP 104536 / JCM 13569 / NCTC 13031 / TMC 1543 / L948) (Mycobacterium abscessus).